Consider the following 437-residue polypeptide: GTPase Der (437 aa).

EngA-type G domains follow at residues 4–167 (PVIA…PEDE) and 176–351 (IRIS…ENHN). Residues 10–17 (GRPNVGKS), 57–61 (DTGGI), 119–122 (NKID), 182–189 (GRPNVGKS), 229–233 (DTAGM), and 294–297 (NKWD) contribute to the GTP site. Residues 352–436 (LRVPTHVLND…PIKIIARKKN (85 aa)) form the KH-like domain.

The protein belongs to the TRAFAC class TrmE-Era-EngA-EngB-Septin-like GTPase superfamily. EngA (Der) GTPase family. As to quaternary structure, associates with the 50S ribosomal subunit.

Functionally, GTPase that plays an essential role in the late steps of ribosome biogenesis. This Halalkalibacterium halodurans (strain ATCC BAA-125 / DSM 18197 / FERM 7344 / JCM 9153 / C-125) (Bacillus halodurans) protein is GTPase Der.